Reading from the N-terminus, the 2336-residue chain is Genome polyprotein (2336 aa).

Residues 1 to 201 (MNTTDCFIAL…WKAKVQKRLK (201 aa)) enclose the Peptidase C28 domain. Residues 1–1481 (MNTTDCFIAL…SFVKRAFKRL (1481 aa)) lie on the Cytoplasmic side of the membrane. Active-site for leader protease activity residues include C51, H148, and D163. 2 disordered regions span residues 197–218 (QKRL…QSGN) and 238–265 (QLGD…NTQN). Residue G202 is the site of N-myristoyl glycine; by host attachment. 2 stretches are compositionally biased toward polar residues: residues 204-218 (GQSS…QSGN) and 238-251 (QLGD…SNEG). Residues 252-265 (STDTTSTHTTNTQN) are compositionally biased toward low complexity. The tract at residues 789–797 (ALLRAATYY) is antigenic epitope. Residues 869–871 (RGD) carry the Cell attachment site motif. The SF3 helicase domain occupies 1190–1354 (NVHIANLCKV…DGYKVNNKLD (165 aa)). Position 1218 to 1225 (1218 to 1225 (GKSGQGKS)) interacts with ATP. The stretch at 1482–1502 (KENFEIVALCLTLLANIVIMI) is an intramembrane region. At 1503–2336 (RETRKRQQMV…NAVCGDAQSL (834 aa)) the chain is on the cytoplasmic side. Residues 1556-1591 (PGHRASDDVNSEPARPVEEQPQAEGPYTGPLERQKP) are disordered. Residues Y1582, Y1605, and Y1629 each carry the O-(5'-phospho-RNA)-tyrosine modification. A Peptidase C3 domain is found at 1653–1849 (APPTDLQKMV…YCSCVSRSML (197 aa)). H1696 functions as the For protease 3C activity; Proton donor/acceptor in the catalytic mechanism. Catalysis depends on for protease 3C activity residues D1734 and C1813. Positions 1879–1887 (MRKTKLAPT) match the Nuclear localization signal motif. The RdRp catalytic domain maps to 2097 to 2215 (KNVWDVDYSA…ASDYDLDFEA (119 aa)). Catalysis depends on D2201, which acts as the For RdRp activity.

The protein belongs to the picornaviruses polyprotein family. Interacts with host ISG15. As to quaternary structure, interacts (via R-G-D motif) with host ITGAV/ITGB6. Interacts with host MAVS; this interaction inhibits binding of host TRAF3 to MAVS, thereby suppressing interferon-mediated responses. In terms of assembly, forms homooligomers. Homohexamer. Interacts with host VIM. Interacts with host BECN1. As to quaternary structure, interacts with host DCTN3. In terms of assembly, interacts with RNA-dependent RNA polymerase; this interaction allows 3B-1 to binds 2 polymerases and act as a primer. It also allows the recruitment of the RNA-dependent RNA polymerase to host membranes. Interacts with RNA-dependent RNA polymerase; this interaction allows 3B-2 to act as a primer. As to quaternary structure, interacts with RNA-dependent RNA polymerase; this interaction allows 3B-3 to act as a primer. In terms of assembly, interacts with 3B-1; this interaction allows 3B-1 to binds 2 polymerases and act as a primer. It also allows the recruitment of the RNA-dependent RNA polymerase to host membranes. Interacts with 3B-2; this interaction allows 3B-2 to act as a primer. Interacts with 3B-3; this interaction allows 3B-3 to act as a primer. Removes six residues from its own C-terminus, generating sLb(pro). In terms of processing, specific enzymatic cleavages in vivo by the viral proteases yield a variety of precursors and mature proteins. The polyprotein seems to be cotranslationally cleaved at the 2A/2B junction by a ribosomal skip from one codon to the next without formation of a peptide bond. This process would release the L-P1-2A peptide from the translational complex. Post-translationally, during virion maturation, immature virions are rendered infectious following cleavage of VP0 into VP4 and VP2. This maturation seems to be an autocatalytic event triggered by the presence of RNA in the capsid and is followed by a conformational change of the particle. Myristoylation is required during RNA encapsidation and formation of the mature virus particle. In terms of processing, uridylylated by the polymerase and covalently linked to the 5'-end of genomic RNA. These uridylylated forms act as a nucleotide-peptide primer for the polymerase.

The protein localises to the host nucleus. It localises to the host cytoplasm. The protein resides in the virion. Its subcellular location is the host endoplasmic reticulum membrane. It is found in the host cytoplasmic vesicle membrane. It catalyses the reaction Autocatalytically cleaves itself from the polyprotein of the foot-and-mouth disease virus by hydrolysis of a Lys-|-Gly bond, but then cleaves host cell initiation factor eIF-4G at bonds -Gly-|-Arg- and -Lys-|-Arg-.. The enzyme catalyses a ribonucleoside 5'-triphosphate + H2O = a ribonucleoside 5'-diphosphate + phosphate + H(+). The catalysed reaction is RNA(n) + a ribonucleoside 5'-triphosphate = RNA(n+1) + diphosphate. It carries out the reaction Selective cleavage of Gln-|-Gly bond in the poliovirus polyprotein. In other picornavirus reactions Glu may be substituted for Gln, and Ser or Thr for Gly.. Its function is as follows. Autocatalytically cleaves itself from the polyprotein at the L/VP0 junction. Also cleaves the host translation initiation factors EIF4G1 and EIF4G3, in order to shut off the capped cellular mRNA transcription. Plays a role in counteracting host innate antiviral response using diverse mechanisms. Possesses a deubiquitinase activity acting on both 'Lys-48' and 'Lys-63'-linked polyubiquitin chains. In turn, inhibits the ubiquitination and subsequent activation of key signaling molecules of type I IFN response such as host RIGI, TBK1, TRAF3 and TRAF6. Inhibits host NF-kappa-B activity by inducing a decrease in RELA mRNA levels. Cleaves a peptide bond in the C-terminus of host ISG15, resulting in the damaging of this modifier that can no longer be attached to target proteins. Also cleaves host G3BP1 and G3BP2 in order to inhibit cytoplasmic stress granules assembly. Lies on the inner surface of the capsid shell. After binding to the host receptor, the capsid undergoes conformational changes. Capsid protein VP4 is released, capsid protein VP1 N-terminus is externalized, and together, they shape a pore in the host membrane through which the viral genome is translocated into the host cell cytoplasm. After genome has been released, the channel shrinks. Functionally, forms an icosahedral capsid of pseudo T=3 symmetry with capsid proteins VP1 and VP3. The capsid is composed of 60 copies of each capsid protein organized in the form of twelve pentamers and encloses the viral positive strand RNA genome. Upon acidifcation in the endosome, dissociates into pentamers. In terms of biological role, forms an icosahedral capsid of pseudo T=3 symmetry with capsid proteins VP0 and VP3. The capsid is composed of 60 copies of each capsid protein organized in the form of twelve pentamers and encloses the viral positive strand RNA genome. Upon acidifcation in the endosome, dissociates into pentamers. Its function is as follows. Forms an icosahedral capsid of pseudo T=3 symmetry with capsid proteins VP2 and VP3. The capsid is composed of 60 copies of each capsid protein organized in the form of twelve pentamers and encloses the viral positive strand RNA genome. Mediates cell entry by attachment to an integrin receptor, usually host ITGAV/ITGB6. In addition, targets host MAVS to suppress type I IFN pathway. Upon acidifcation in the endosome, dissociates into pentamers. Mediates self-processing of the polyprotein by a translational effect termed 'ribosome skipping'. Mechanistically, 2A-mediated cleavage occurs between the C-terminal glycine and the proline of the downstream protein 2B. In the case of foot-and-mouth disease virus, the 2A oligopeptide is post-translationally 'trimmed' from the C-terminus of the upstream protein 1D by 3C proteinase. Functionally, plays an essential role in the virus replication cycle by acting as a viroporin. Creates a pore in the host endoplasmic reticulum and as a consequence releases Ca2+ in the cytoplasm of infected cell. In turn, high levels of cytoplasmic calcium may trigger membrane trafficking and transport of viral ER-associated proteins to viroplasms, sites of viral genome replication. In terms of biological role, associates with and induces structural rearrangements of intracellular membranes. Triggers host autophagy by interacting with host BECN1 and thereby promotes viral replication. Participates in viral replication and interacts with host DHX9. Displays RNA-binding, nucleotide binding and NTPase activities. May play a role in virion morphogenesis and viral RNA encapsidation by interacting with the capsid protein VP3. Its function is as follows. Plays important roles in virus replication, virulence and host range. Cooperates with host DDX56 to inhibit IRF3 nuclear translocation and subsequent type I interferon production. Covalently linked to the 5'-end of both the positive-strand and negative-strand genomic RNAs. Acts as a genome-linked replication primer. Functionally, cysteine protease that generates mature viral proteins from the precursor polyprotein. In addition to its proteolytic activity, binds to viral RNA and thus influences viral genome replication. RNA and substrate bind cooperatively to the protease. In terms of biological role, RNA-directed RNA polymerase 3D-POL replicates genomic and antigenomic RNA by recognizing replications specific signals. Covalently attaches UMP to a tyrosine of VPg, which is used to prime RNA synthesis. The positive stranded RNA genome is first replicated at virus induced membranous vesicles, creating a dsRNA genomic replication form. This dsRNA is then used as template to synthesize positive stranded RNA genomes. ss(+)RNA genomes are either translated, replicated or encapsidated. The protein is Genome polyprotein of Foot-and-mouth disease virus (isolate -/Azerbaijan/A22-550/1965 serotype A) (FMDV).